Consider the following 661-residue polypeptide: Transmembrane and coiled-coil domain-containing protein STS1 (661 aa).

Disordered regions lie at residues 34–71 (AHHH…GADA) and 154–185 (VGNT…DDQL). The segment covering 59-69 (SSSSSNSGAGA) has biased composition (low complexity). Residues 175–184 (SPGESSHDDQ) show a composition bias toward basic and acidic residues. 4 helical membrane passes run 306–326 (ALLA…FGAL), 333–353 (LVPV…GSVA), 355–375 (SVAV…SKMA), and 466–486 (LSGL…TDFI).

This sequence belongs to the TMCO4 family. In terms of assembly, interacts with PKS10/PKS2 and 4CLL9/ACOS12.

The protein localises to the endoplasmic reticulum membrane. Involved in anther lipids biosynthesis and is required for tapetum degradation and pollen wall formation. Required for the formation of Ubisch bodies and microspores. Possesses lipase activity in vitro toward two synthetic substrates, p-nitrophenyl acetate (pNPA) and p-nitrophenyl butyrate (pNPB). This is Transmembrane and coiled-coil domain-containing protein STS1 from Oryza sativa subsp. japonica (Rice).